We begin with the raw amino-acid sequence, 271 residues long: Formamidopyrimidine-DNA glycosylase (271 aa).

Catalysis depends on proline 2, which acts as the Schiff-base intermediate with DNA. The active-site Proton donor is the glutamate 3. The active-site Proton donor; for beta-elimination activity is the lysine 57. DNA contacts are provided by histidine 90, arginine 109, and lysine 151. The FPG-type zinc-finger motif lies at 236-270; that stretch reads HVYGRGGETCTECGHLLSEIRLGQRTTVFCSLCQT. Catalysis depends on arginine 260, which acts as the Proton donor; for delta-elimination activity.

It belongs to the FPG family. As to quaternary structure, monomer. Zn(2+) is required as a cofactor.

It catalyses the reaction Hydrolysis of DNA containing ring-opened 7-methylguanine residues, releasing 2,6-diamino-4-hydroxy-5-(N-methyl)formamidopyrimidine.. The enzyme catalyses 2'-deoxyribonucleotide-(2'-deoxyribose 5'-phosphate)-2'-deoxyribonucleotide-DNA = a 3'-end 2'-deoxyribonucleotide-(2,3-dehydro-2,3-deoxyribose 5'-phosphate)-DNA + a 5'-end 5'-phospho-2'-deoxyribonucleoside-DNA + H(+). Its function is as follows. Involved in base excision repair of DNA damaged by oxidation or by mutagenic agents. Acts as a DNA glycosylase that recognizes and removes damaged bases. Has a preference for oxidized purines, such as 7,8-dihydro-8-oxoguanine (8-oxoG). Has AP (apurinic/apyrimidinic) lyase activity and introduces nicks in the DNA strand. Cleaves the DNA backbone by beta-delta elimination to generate a single-strand break at the site of the removed base with both 3'- and 5'-phosphates. The sequence is that of Formamidopyrimidine-DNA glycosylase from Shewanella amazonensis (strain ATCC BAA-1098 / SB2B).